Here is a 181-residue protein sequence, read N- to C-terminus: 3-hexulose-6-phosphate isomerase (181 aa).

The region spanning isoleucine 27 to leucine 168 is the SIS domain. Residues serine 45 and serine 84 to threonine 89 contribute to the substrate site. Glutamate 148 functions as the Proton acceptor in the catalytic mechanism.

It belongs to the SIS family. PHI subfamily. In terms of assembly, homodimer.

The enzyme catalyses D-arabino-hex-3-ulose 6-phosphate = beta-D-fructose 6-phosphate. The protein operates within one-carbon metabolism; formaldehyde assimilation via RuMP pathway; D-fructose 6-phosphate from D-ribulose 5-phosphate and formaldehyde: step 2/2. Catalyzes the isomerization between 3-hexulose 6-phosphate and fructose 6-phosphate. The chain is 3-hexulose-6-phosphate isomerase (rmpB) from Methylomonas aminofaciens.